Here is a 274-residue protein sequence, read N- to C-terminus: NH(3)-dependent NAD(+) synthetase (274 aa).

An ATP-binding site is contributed by 46–53 (GISGGQDS). A Mg(2+)-binding site is contributed by D52. R140 lines the deamido-NAD(+) pocket. T160 is a binding site for ATP. Mg(2+) is bound at residue E165. Positions 173 and 180 each coordinate deamido-NAD(+). 2 residues coordinate ATP: K189 and T211. 260-261 (HK) lines the deamido-NAD(+) pocket.

It belongs to the NAD synthetase family. In terms of assembly, homodimer.

The catalysed reaction is deamido-NAD(+) + NH4(+) + ATP = AMP + diphosphate + NAD(+) + H(+). It participates in cofactor biosynthesis; NAD(+) biosynthesis; NAD(+) from deamido-NAD(+) (ammonia route): step 1/1. Functionally, catalyzes the ATP-dependent amidation of deamido-NAD to form NAD. Uses ammonia as a nitrogen source. The polypeptide is NH(3)-dependent NAD(+) synthetase (Streptococcus pneumoniae serotype 2 (strain D39 / NCTC 7466)).